Consider the following 373-residue polypeptide: Probable G-protein coupled receptor 173 (373 aa).

At 1-26 the chain is on the extracellular side; sequence MANTTGEPEEVSGALSPPSAVAYVKL. Residue N3 is glycosylated (N-linked (GlcNAc...) asparagine). Residues 27–47 form a helical membrane-spanning segment; sequence VLLGLIMCVSLAGNAILSLLV. The Cytoplasmic portion of the chain corresponds to 48–59; the sequence is LKDRALHKAPYY. A helical transmembrane segment spans residues 60–80; it reads FLLDLCLADGIRSAVCFPFVL. Topologically, residues 81–97 are extracellular; the sequence is ASVRHGSSWTFSALSCK. Cysteines 96 and 174 form a disulfide. A helical membrane pass occupies residues 98-118; the sequence is IVAFMAVLFCFHAAFMLFCIS. Residues 119 to 139 lie on the Cytoplasmic side of the membrane; that stretch reads VTRYMAIAHHRFYAKRMTLWT. The helical transmembrane segment at 140–160 threads the bilayer; sequence CAAVICMAWTLSVAMAFPPVF. The Extracellular portion of the chain corresponds to 161–188; that stretch reads DVGTYKFIREEDQCIFEHRYFKANDTLG. N-linked (GlcNAc...) asparagine glycosylation is present at N184. Residues 189-209 traverse the membrane as a helical segment; that stretch reads FMLMLAVLMAATHAVYGKLLL. Topologically, residues 210 to 287 are cytoplasmic; the sequence is FEYRHRKMKP…VKGEKQLGRM (78 aa). A helical transmembrane segment spans residues 288-308; that stretch reads FYAITLLFLLLWSPYIVACYW. At 309–322 the chain is on the extracellular side; sequence RVFVKACAVPHRYL. The helical transmembrane segment at 323 to 343 threads the bilayer; it reads ATAVWMSFAQAAVNPIVCFLL. Topologically, residues 344–373 are cytoplasmic; that stretch reads NKDLKKCLRTHAPCWGTGGAPAPREPYCVM.

It belongs to the G-protein coupled receptor 1 family.

Its subcellular location is the cell membrane. Is a receptor for the SMIM20 derived peptides Phoenixin-14 and Phoenixin-20. It mediates the Phoenixin-14 and Phoenixin-20 augmentation of gonadotropin-releasing hormone (GNRH) signaling in the hypothalamus and pituitary gland. In the ovary, it mediates the effects of Phoenixin-14 and Phoenixin-20 induced granulosa cell proliferation during follicular growth. The polypeptide is Probable G-protein coupled receptor 173 (GPR173) (Bos taurus (Bovine)).